The sequence spans 202 residues: Transcription factor IBH1 (202 aa).

Positions 1–16 (MDAKRTPPPPTPPNPN) are enriched in pro residues. Residues 1 to 33 (MDAKRTPPPPTPPNPNPSVIGSGAAADGGGFGR) are disordered. Positions 136–185 (TSAAARAVPPPPRQQGEPPRADALRRLVPGGAGMEYSSLLEETADYLRSL) constitute a bHLH domain.

It belongs to the bHLH protein family. Interacts with ILI1.

Functionally, atypical and probable non DNA-binding bHLH transcription factor that acts as a negative regulator of cell elongation and plant development. Binds the transcription factor ILI1 and forms a heterodimer of antagonistic bHLH transcription factors that function downstream of BZR1 to mediate brassinosteroid regulation of cell elongation and lamina inclination. The protein is Transcription factor IBH1 (IBH1) of Oryza sativa subsp. indica (Rice).